Reading from the N-terminus, the 355-residue chain is Oligopeptide transport ATP-binding protein AmiE (355 aa).

Positions 9-260 (LTARDIVVEF…PRHPYTWSLL (252 aa)) constitute an ABC transporter domain. 45–52 (GESGSGKS) contributes to the ATP binding site.

The protein belongs to the ABC transporter superfamily.

The protein resides in the cell membrane. Part of the binding-protein-dependent transport system for oligopeptides. Probably responsible for energy coupling to the transport system. The chain is Oligopeptide transport ATP-binding protein AmiE (amiE) from Streptococcus pneumoniae serotype 4 (strain ATCC BAA-334 / TIGR4).